Consider the following 503-residue polypeptide: Maturase K (503 aa).

The protein belongs to the intron maturase 2 family. MatK subfamily.

The protein localises to the plastid. It localises to the chloroplast. Functionally, usually encoded in the trnK tRNA gene intron. Probably assists in splicing its own and other chloroplast group II introns. In Kunzea pulchella (Red kunzea), this protein is Maturase K.